A 436-amino-acid chain; its full sequence is Glutamyl-tRNA reductase (436 aa).

Residues 49–52, Ser109, 114–116, and Gln120 each bind substrate; these read TCNR and EGQ. The active-site Nucleophile is Cys50. 198–203 contributes to the NADP(+) binding site; that stretch reads GAGRMS.

It belongs to the glutamyl-tRNA reductase family. In terms of assembly, homodimer.

The catalysed reaction is (S)-4-amino-5-oxopentanoate + tRNA(Glu) + NADP(+) = L-glutamyl-tRNA(Glu) + NADPH + H(+). It participates in porphyrin-containing compound metabolism; protoporphyrin-IX biosynthesis; 5-aminolevulinate from L-glutamyl-tRNA(Glu): step 1/2. The protein operates within porphyrin-containing compound metabolism; chlorophyll biosynthesis. Its function is as follows. Catalyzes the NADPH-dependent reduction of glutamyl-tRNA(Glu) to glutamate 1-semialdehyde (GSA). The chain is Glutamyl-tRNA reductase from Prochlorococcus marinus (strain MIT 9303).